We begin with the raw amino-acid sequence, 475 residues long: Transmembrane protein 181 (475 aa).

9 consecutive transmembrane segments (helical) span residues 16–36 (HFVL…FVGI), 131–151 (EIIV…IVGF), 175–195 (LEIW…CLFA), 214–234 (SVLL…SFLV), 245–265 (LFQS…YHGI), 276–296 (FYLP…TLGI), 320–340 (MKVF…FLIV), 356–376 (LKFL…ILYL), and 401–421 (FLSF…VYSP). Phosphoserine is present on Ser-443.

This sequence belongs to the TMEM181 family. In terms of assembly, interacts with cytolethal distending toxin.

The protein resides in the membrane. Mediates action of cytolethal distending toxins (CDT), which are secreted by many pathogenic bacteria. Expression level of TMEM181 is rate-limiting for intoxication. This is Transmembrane protein 181 (TMEM181) from Homo sapiens (Human).